A 204-amino-acid chain; its full sequence is Thymidylate kinase (204 aa).

11-18 (GIDGAGKS) contacts ATP.

It belongs to the thymidylate kinase family.

The enzyme catalyses dTMP + ATP = dTDP + ADP. Phosphorylation of dTMP to form dTDP in both de novo and salvage pathways of dTTP synthesis. This Janthinobacterium sp. (strain Marseille) (Minibacterium massiliensis) protein is Thymidylate kinase.